The chain runs to 337 residues: Carbonic anhydrase 14 (337 aa).

An N-terminal signal peptide occupies residues methionine 1 to alanine 15. Topologically, residues alanine 16–methionine 290 are extracellular. One can recognise an Alpha-carbonic anhydrase domain in the interval glutamine 20–phenylalanine 278. Cysteine 40 and cysteine 221 form a disulfide bridge. Histidine 84 (proton donor/acceptor) is an active-site residue. Zn(2+)-binding residues include histidine 109, histidine 111, and histidine 135. Asparagine 213 is a glycosylation site (N-linked (GlcNAc...) asparagine). A substrate-binding site is contributed by threonine 217 to threonine 218. The chain crosses the membrane as a helical span at residues leucine 291–isoleucine 311. Topologically, residues alanine 312–alanine 337 are cytoplasmic. The residue at position 325 (serine 325) is a Phosphoserine.

It belongs to the alpha-carbonic anhydrase family. Requires Zn(2+) as cofactor. As to expression, high expression in all parts of the central nervous system and lower expression in adult liver, heart, small intestine, colon, kidney, urinary bladder and skeletal muscle.

It is found in the membrane. It carries out the reaction hydrogencarbonate + H(+) = CO2 + H2O. With respect to regulation, activated by histamine, L-adrenaline, L- and D-histidine, and L- and D-phenylalanine. Inhibited by coumarins, saccharin, sulfonamide derivatives such as acetazolamide (AZA) and Foscarnet (phosphonoformate trisodium salt). In terms of biological role, reversible hydration of carbon dioxide. The protein is Carbonic anhydrase 14 (CA14) of Homo sapiens (Human).